The sequence spans 435 residues: Transforming growth factor beta-2 proprotein (435 aa).

Positions 1 to 20 (MHYCVLSAFLLLHLVTVALS) are cleaved as a signal peptide. Residues N72, N140, and N241 are each glycosylated (N-linked (GlcNAc...) asparagine). 4 cysteine pairs are disulfide-bonded: C309–C318, C317–C380, C346–C411, and C350–C413.

The protein belongs to the TGF-beta family. As to quaternary structure, interacts with the serine proteases, HTRA1 and HTRA3. Interacts with ASPN. Interacts with MFAP5. In terms of assembly, interacts with Transforming growth factor beta-2 (TGF-beta-2) chain; interaction is non-covalent and maintains (TGF-beta-2) in a latent state. Interacts with LRRC32/GARP; leading to regulate activation of TGF-beta-2. Interacts with NREP; the interaction results in a decrease in TGFB2 autoinduction. Transforming growth factor beta-2: Homodimer; disulfide-linked. Transforming growth factor beta-2: Interacts with TGF-beta receptors (TGFBR1 and TGFBR2), leading to signal transduction. Post-translationally, the precursor proprotein is cleaved in the Golgi apparatus to form Transforming growth factor beta-2 (TGF-beta-2) and Latency-associated peptide (LAP) chains, which remain non-covalently linked, rendering TGF-beta-2 inactive.

The protein resides in the secreted. The protein localises to the extracellular space. It localises to the extracellular matrix. Its function is as follows. Precursor of the Latency-associated peptide (LAP) and Transforming growth factor beta-2 (TGF-beta-2) chains, which constitute the regulatory and active subunit of TGF-beta-2, respectively. Required to maintain the Transforming growth factor beta-2 (TGF-beta-2) chain in a latent state during storage in extracellular matrix. Associates non-covalently with TGF-beta-2 and regulates its activation via interaction with 'milieu molecules', such as LTBP1 and LRRC32/GARP, that control activation of TGF-beta-2. Functionally, multifunctional protein that regulates various processes such as angiogenesis and heart development. Activation into mature form follows different steps: following cleavage of the proprotein in the Golgi apparatus, Latency-associated peptide (LAP) and Transforming growth factor beta-2 (TGF-beta-2) chains remain non-covalently linked rendering TGF-beta-2 inactive during storage in extracellular matrix. At the same time, LAP chain interacts with 'milieu molecules', such as LTBP1 and LRRC32/GARP, that control activation of TGF-beta-2 and maintain it in a latent state during storage in extracellular milieus. Once activated following release of LAP, TGF-beta-2 acts by binding to TGF-beta receptors (TGFBR1 and TGFBR2), which transduce signal. The polypeptide is Transforming growth factor beta-2 proprotein (TGFB2) (Sus scrofa (Pig)).